Consider the following 108-residue polypeptide: Immunoglobulin kappa variable 11-125 (108 aa).

A framework-1 region spans residues 1–23 (DVQMIQSPSSLSASLGDIVTMTC). A disulfide bridge connects residues Cys-23 and Cys-88. Residues 24–34 (QASQGTSINLN) form a complementarity-determining-1 region. Residues 35–49 (WFQQKPGKAPKLLIY) form a framework-2 region. The complementarity-determining-2 stretch occupies residues 50 to 56 (GASILED). The framework-3 stretch occupies residues 57–88 (GVPSRFSGSRYGTDFTLTISSLEDEDMATYFC). Residues 89–97 (LQHSYLPYT) are complementarity-determining-3. Residues 98–108 (FGGGTKLEIKR) are framework-4.

In Mus musculus (Mouse), this protein is Immunoglobulin kappa variable 11-125.